The primary structure comprises 249 residues: Metal-staphylopine import system ATP-binding protein CntF (249 aa).

Residues 2 to 244 (IKVTDVEKSY…DNAYTRELIE (243 aa)) form the ABC transporter domain. 42 to 49 (GESGSGKS) contributes to the ATP binding site.

It belongs to the ABC transporter superfamily. The complex is composed of two ATP-binding proteins (CntD and CntF), two transmembrane proteins (CntB and CntC) and a solute-binding protein (CntA).

The protein localises to the cell membrane. Its function is as follows. Part of the ABC transporter complex CntABCDF (Opp1) involved in the uptake of metal in complex with the metallophore staphylopine (StP). May be involved in the import of a large array of divalent metals ions such as nickel, cobalt, zinc, copper and iron. Probably responsible for energy coupling to the transport system. The polypeptide is Metal-staphylopine import system ATP-binding protein CntF (Staphylococcus aureus (strain Mu50 / ATCC 700699)).